The chain runs to 847 residues: Leucine--tRNA ligase (847 aa).

Residues Pro-41–His-51 carry the 'HIGH' region motif. Residues Lys-619–Ser-623 carry the 'KMSKS' region motif. Lys-622 is a binding site for ATP.

Belongs to the class-I aminoacyl-tRNA synthetase family.

It is found in the cytoplasm. It carries out the reaction tRNA(Leu) + L-leucine + ATP = L-leucyl-tRNA(Leu) + AMP + diphosphate. The chain is Leucine--tRNA ligase from Cereibacter sphaeroides (strain ATCC 17023 / DSM 158 / JCM 6121 / CCUG 31486 / LMG 2827 / NBRC 12203 / NCIMB 8253 / ATH 2.4.1.) (Rhodobacter sphaeroides).